The primary structure comprises 220 residues: MSKKKGLSLEEKRSRMMEIFFETKDVFQLKDIEKIAPKSKGITPMSVKEVLQSLVDDNMVDTERVGTSNYYWAFPSKALHARKRRLEELEKQLEDGSQRKKALQQAVDKAKVGREVNEEREDLLKELTALKGQRDQMKVEIEKYQECDPAVVEEIRNANIAAKEAVARWTGGTFGNYLISYLLTCSLTRQEPWAHHLSPSSGFSPGTACQTCYYYQQAIS.

Residues 76-147 (SKALHARKRR…KVEIEKYQEC (72 aa)) adopt a coiled-coil conformation.

The protein belongs to the MND1 family.

It is found in the nucleus. Required for proper homologous chromosome pairing and efficient cross-over and intragenic recombination during meiosis. Stimulates both DMC1- and RAD51-mediated homologous strand assimilation, which is required for the resolution of meiotic double-strand breaks. This is Meiotic nuclear division protein 1 homolog from Danio rerio (Zebrafish).